Consider the following 323-residue polypeptide: CYFIP-related Rac1 interactor A (323 aa).

It belongs to the CYRI family. Interacts with RAC1 (GTP-bound form preferentially).

The protein resides in the membrane. Functionally, may negatively regulate RAC1 signaling and RAC1-driven cytoskeletal remodeling. May regulate chemotaxis, cell migration and epithelial polarization by controlling the polarity, plasticity, duration and extent of protrusions. The polypeptide is CYFIP-related Rac1 interactor A (CYRIA) (Bos taurus (Bovine)).